The following is a 176-amino-acid chain: MNKNDDKEGMAMFSALIEGIKPIAQDKRHFRTPLKTKQEIELKEQQLHADSYFSDTYQPLLPVQGPMRWLDEGVDSLELKRLRRGDYQPDLLLDLHGYRQSEAKLELAALIQACVKQQSQCCCVMHGYGTGILKQQVPMWLVQHPKVKAFHQAPKEWGGDAALLVLIDIGDQPHRR.

One can recognise a Smr domain in the interval 93–168 (LDLHGYRQSE…GDAALLVLID (76 aa)).

The protein belongs to the SmrB family. As to quaternary structure, associates with collided ribosomes, but not with correctly translating polysomes.

Functionally, acts as a ribosome collision sensor. Detects stalled/collided disomes (pairs of ribosomes where the leading ribosome is stalled and a second ribosome has collided with it) and endonucleolytically cleaves mRNA at the 5' boundary of the stalled ribosome. Stalled/collided disomes form a new interface (primarily via the 30S subunits) that binds SmrB. Cleaved mRNA becomes available for tmRNA ligation, leading to ribosomal subunit dissociation and rescue of stalled ribosomes. The protein is Ribosome rescue factor SmrB of Shewanella sp. (strain ANA-3).